We begin with the raw amino-acid sequence, 214 residues long: Pyridoxine/pyridoxamine 5'-phosphate oxidase (214 aa).

Residues Arg8–Tyr11 and Lys67 each bind substrate. Residues Arg62–Lys67, Tyr77–Thr78, Lys84, and Gln106 each bind FMN. Positions 124, 128, and 132 each coordinate substrate. FMN-binding positions include Gln141–Ser142 and Trp186. Arg192–His194 is a substrate binding site. An FMN-binding site is contributed by Arg196.

Belongs to the pyridoxamine 5'-phosphate oxidase family. As to quaternary structure, homodimer. FMN is required as a cofactor.

It carries out the reaction pyridoxamine 5'-phosphate + O2 + H2O = pyridoxal 5'-phosphate + H2O2 + NH4(+). The catalysed reaction is pyridoxine 5'-phosphate + O2 = pyridoxal 5'-phosphate + H2O2. It functions in the pathway cofactor metabolism; pyridoxal 5'-phosphate salvage; pyridoxal 5'-phosphate from pyridoxamine 5'-phosphate: step 1/1. Its pathway is cofactor metabolism; pyridoxal 5'-phosphate salvage; pyridoxal 5'-phosphate from pyridoxine 5'-phosphate: step 1/1. Functionally, catalyzes the oxidation of either pyridoxine 5'-phosphate (PNP) or pyridoxamine 5'-phosphate (PMP) into pyridoxal 5'-phosphate (PLP). The protein is Pyridoxine/pyridoxamine 5'-phosphate oxidase of Flavobacterium johnsoniae (strain ATCC 17061 / DSM 2064 / JCM 8514 / BCRC 14874 / CCUG 350202 / NBRC 14942 / NCIMB 11054 / UW101) (Cytophaga johnsonae).